A 506-amino-acid polypeptide reads, in one-letter code: MIDNVITAIDRVAAEHPTRVAYDYEGTQYTYAQLKEGSDRLAGFFAESLPAGEPIIVYGGQTFDMVEVFLGLSKSGHAYIPIDTHSPNERITQVQDVAHAPAVIEVAPLPITVPDVKIIRAPALHQAEQSHAPIHSLQHAVAGDDNYYIIFTSGTTGKPKGVQISHDNLLSYVNWNISDFGLEEGVVAMSQPPYSFDLSVMDLYPTLVLGGTLKALPKEVTDNFKELFATLPKLGLNEWVSTPSFVEIALLDPNFKQENYPNLTHFLFCGEELVNKTAQALITRFPKATVYNTYGPTEATVAVTGMAITQAIVDQYPRLPIGYAKPDTNVYVVDEQGEQVSAGTEGELMIVGPSVSKGYLNNPDKTAAAFFKAGNQRGYRSGDLVTMTADGMVFYRGRTDFQVKLHGYRIELEDVDHNLNQVSYIKQASTVPRYDKDHKVAQLIAFAVAKPNDFDSEMKLTQAIKAELGKMVMEYMIPQRIIYRDQLPLTANGKVDRKALIAEVNH.

Residue 152 to 153 (TS) coordinates ATP. Residue Asp-197 coordinates D-alanine. 292–297 (NTYGPT) is a binding site for ATP. A D-alanine-binding site is contributed by Val-301. ATP-binding positions include Asp-383, 395–398 (YRGR), and Lys-494. Lys-494 is a binding site for D-alanine.

Belongs to the ATP-dependent AMP-binding enzyme family. DltA subfamily.

Its subcellular location is the cytoplasm. The catalysed reaction is holo-[D-alanyl-carrier protein] + D-alanine + ATP = D-alanyl-[D-alanyl-carrier protein] + AMP + diphosphate. The protein operates within cell wall biogenesis; lipoteichoic acid biosynthesis. Catalyzes the first step in the D-alanylation of lipoteichoic acid (LTA), the activation of D-alanine and its transfer onto the D-alanyl carrier protein (Dcp) DltC. In an ATP-dependent two-step reaction, forms a high energy D-alanyl-AMP intermediate, followed by transfer of the D-alanyl residue as a thiol ester to the phosphopantheinyl prosthetic group of the Dcp. D-alanylation of LTA plays an important role in modulating the properties of the cell wall in Gram-positive bacteria, influencing the net charge of the cell wall. The protein is D-alanine--D-alanyl carrier protein ligase of Lacticaseibacillus rhamnosus (Lactobacillus rhamnosus).